Here is a 367-residue protein sequence, read N- to C-terminus: MEEENISLPLSQDTFQDLWDNVSAPPISTIQTAALENEAWPAERQMNMMCNFMDSTFNEALFNLLPEPPSRDGANSSSPTVPVTTDYPGEYGFKLRFQKSGTAKSVTSTYSEILNKLYCQLAKTSLVEVLLGKDPPMGAVLRATAIYKKTEHVAEVVRRCPHHQNEDSAEHRSHLIRMEGSERAQYFEHPHTKRQSVTVPYEPPQLGSEFTTILLSFMCNSSCMGGMNRRPILTILTLETQEGIVLGRRCFEVRVCACPGRDRKTEETNSTKMQNDAKDAKKRKSVPTPDSTTIKKSKTASSAEEDNNEVYTLQIRGRKRYEMLKKINDGLDLLENKPKSKATHRPDGPIPPSGKRLLHRGEKSDSD.

The segment at 1–47 (MEEENISLPLSQDTFQDLWDNVSAPPISTIQTAALENEAWPAERQMN) is transcription activation (acidic). Residues 86-273 (DYPGEYGFKL…KTEETNSTKM (188 aa)) mediate DNA binding. Zn(2+) contacts are provided by Cys160, His163, Cys219, and Cys223. Residues 254–261 (RVCACPGR) are interaction with DNA. The span at 262 to 279 (DRKTEETNSTKMQNDAKD) shows a compositional bias: basic and acidic residues. Disordered regions lie at residues 262–306 (DRKT…AEED) and 332–367 (DLLE…SDSD). Positions 282–300 (KRKSVPTPDSTTIKKSKTA) match the Bipartite nuclear localization signal motif. The segment covering 291–302 (STTIKKSKTASS) has biased composition (low complexity). Residues 308 to 337 (NEVYTLQIRGRKRYEMLKKINDGLDLLENK) form an oligomerization region. Positions 322-333 (EMLKKINDGLDL) match the Nuclear export signal motif. The interval 342–363 (ATHRPDGPIPPSGKRLLHRGEK) is basic (repression of DNA-binding).

It belongs to the p53 family. Binds DNA as a homotetramer. Zn(2+) serves as cofactor.

It localises to the cytoplasm. Its subcellular location is the nucleus. In terms of biological role, multifunctional transcription factor that induces cell cycle arrest, DNA repair or apoptosis upon binding to its target DNA sequence. Acts as a tumor suppressor in many tumor types; induces growth arrest or apoptosis depending on the physiological circumstances and cell type. Negatively regulates cell division by controlling expression of a set of genes required for this process. One of the activated genes is an inhibitor of cyclin-dependent kinases. Apoptosis induction seems to be mediated either by stimulation of BAX and FAS antigen expression, or by repression of Bcl-2 expression. The protein is Cellular tumor antigen p53 (tp53) of Tetraodon miurus (Congo puffer).